Consider the following 877-residue polypeptide: MNLRSRLVNATERAVLFQIFKDVQNDPEKYDNAVEAICESIDYFGKFLTDSEYLTQIKPILDTQCPTKSIICFSKCLTKVSTDINTTTFRDVITMLDWLKYVVEKSLTSAICSSLKVKETDVSAVQLYREFASACSNIPEKVSNCCAKALSGEHVKYINTVKWIFKMNLVQGIQKAMLLAHDDIVTAAPFTSFYGSGGPYMKTVAEIISSGRNIDITNKDGLLVQMIEWIGSLNNFDSQWRRMMFLIFQEPTYQGIQVHESLLTTLFLISKSDQILKRCIEATDLTGTLKRVVMVKLPFQRVLKRKTIEILINFVYRTKEQFAIQLLETSVKIWSDLNYAKSAPESQERHIVRMILYLVHLFRTCSSIDWESLFLNSMDGVHCRMSMLPMYVQSGIFVNQALCKQATKHRSKTHGSDEQPPETLEENKFVSSEVGKIWFEEMTSILEHGFNSSTVKDSERVRETANEITKDDSGEEFEETNAQRLQNNKDSAAITSKNNLRLDSDDDEDFPDYQVNESEKIFKNLEIGEEPKNKVTPPAYIADAFEMLLEKEKYEVFEAAFFNITNLINRRPIGFPQIAEKLFIRILHLQNNFGTPKFKETVDEIAVACITQRPEIVPSVVRLIIAPGQGFSIKQRLLHYIHNAADGMGALDKKLEECVMAQQLRIGGPTLSIILHRTINTDYDDEDEDPHRLLVPEWRRMVDARIAANTRRIGTTREPPRAGVVNRLAQAAKYMFYPLLVLPRGENASLLGKDSDLLASLIMVASMVYVRCGVCPQIHRMSSELISYATPHRFSENAKLRTACIIAHLNVTTLLPGDLMDELFDVPALIGWFDWANSVLVNASSSQLEKDMTRQFGHSVTKHLQRYHPAVLQHQDV.

Residues 488–501 (NKDSAAITSKNNLR) are compositionally biased toward polar residues. The interval 488–509 (NKDSAAITSKNNLRLDSDDDED) is disordered.

This sequence belongs to the TEL2 family.

Its subcellular location is the nucleus. It localises to the chromosome. It is found in the telomere. Functionally, DNA damage checkpoint protein required for DNA damage-induced cell cycle arrest and apoptosis, thereby playing a role in genome stability. Regulator of telomere length. The sequence is that of Telomere length regulation protein clk-2 (clk-2) from Caenorhabditis elegans.